The sequence spans 567 residues: Sensor histidine kinase MtrB (567 aa).

Residues 1–15 (MIFGSRRRIRGRRGR) are compositionally biased toward basic residues. The disordered stretch occupies residues 1–20 (MIFGSRRRIRGRRGRSGPMT). Transmembrane regions (helical) follow at residues 42–62 (VVALTLGLSLAVILALGFVLT) and 213–233 (GTMATGGLVLLVLLAGIALLV). An HAMP domain is found at 235-287 (RQVVVPVRSASRIAERFAEGHLSERMPVRGEDDMARLAVSFNDMAESLSRQIA). Positions 302–519 (DVSHELRTPL…CFRLTLPLVR (218 aa)) constitute a Histidine kinase domain. H305 carries the phosphohistidine; by autocatalysis modification. Residues 526-567 (SPLPMKPIPQPVLQPVAQPNPQPMPPEYKERQRPREHAEWSG) form a disordered region. Pro residues predominate over residues 529–551 (PMKPIPQPVLQPVAQPNPQPMPP). Positions 552–567 (EYKERQRPREHAEWSG) are enriched in basic and acidic residues.

The protein localises to the cell membrane. It carries out the reaction ATP + protein L-histidine = ADP + protein N-phospho-L-histidine.. Its function is as follows. Member of the two-component regulatory system MtrA/MtrB. Seems to function as a membrane-associated protein kinase that phosphorylates MtrA in response to environmental signals. This Mycobacterium bovis (strain ATCC BAA-935 / AF2122/97) protein is Sensor histidine kinase MtrB (mtrB).